A 404-amino-acid chain; its full sequence is MKLPIYLDYAATTPVDPRVAEKMMQYMTMDGIFGNPASRSHRYGWQAEEAVDIARNQVAELINADPREIVFTSGATESDNLAIKGVAHFYHKKGKHIITSKTEHKAVLDTCRQLEREGFEVTYLEPESNGIIPIEKLEAAMREDTILLSLMHVNNEIGVIHDIDAIGELCRAKKVIFHVDAAQSAGKLPIDLQKSKVDLMSISAHKMYGPKGIGALYVRRKPRIRLEATMHGGGHERGMRSGTLATHQIVGMGEAAAIAKADMESDNARIRRLRDRLWDGIKHIEETYINGDAEQRYCGSLNVSFNFVEGESLMMALKDLAVSSGSACTSASLEPSYVLRALGLDDEMAHSSIRFSIGRFTTEEEIDHAIETITKSIGQLREMSPLWEMFKDGVDLSTVQWAHH.

Pyridoxal 5'-phosphate contacts are provided by residues 75 to 76, asparagine 155, glutamine 183, and 203 to 205; these read AT and SAH. Lysine 206 is modified (N6-(pyridoxal phosphate)lysine). Residue threonine 243 participates in pyridoxal 5'-phosphate binding. Residue cysteine 328 is the Cysteine persulfide intermediate of the active site. Cysteine 328 contributes to the [2Fe-2S] cluster binding site.

It belongs to the class-V pyridoxal-phosphate-dependent aminotransferase family. NifS/IscS subfamily. As to quaternary structure, homodimer. Forms a heterotetramer with IscU, interacts with other sulfur acceptors. Requires pyridoxal 5'-phosphate as cofactor.

The protein localises to the cytoplasm. It catalyses the reaction (sulfur carrier)-H + L-cysteine = (sulfur carrier)-SH + L-alanine. Its pathway is cofactor biosynthesis; iron-sulfur cluster biosynthesis. Functionally, master enzyme that delivers sulfur to a number of partners involved in Fe-S cluster assembly, tRNA modification or cofactor biosynthesis. Catalyzes the removal of elemental sulfur atoms from cysteine to produce alanine. Functions as a sulfur delivery protein for Fe-S cluster synthesis onto IscU, an Fe-S scaffold assembly protein, as well as other S acceptor proteins. This chain is Cysteine desulfurase IscS, found in Shewanella loihica (strain ATCC BAA-1088 / PV-4).